The sequence spans 287 residues: ATP synthase gamma chain (287 aa).

It belongs to the ATPase gamma chain family. F-type ATPases have 2 components, CF(1) - the catalytic core - and CF(0) - the membrane proton channel. CF(1) has five subunits: alpha(3), beta(3), gamma(1), delta(1), epsilon(1). CF(0) has three main subunits: a, b and c.

It localises to the cell inner membrane. In terms of biological role, produces ATP from ADP in the presence of a proton gradient across the membrane. The gamma chain is believed to be important in regulating ATPase activity and the flow of protons through the CF(0) complex. This is ATP synthase gamma chain from Geotalea daltonii (strain DSM 22248 / JCM 15807 / FRC-32) (Geobacter daltonii).